Here is a 196-residue protein sequence, read N- to C-terminus: MRSVSVGEVARRDVITGSPTETAVEIAYKMREHGIGSVVIVNEKDEPIGIITERDLVIKVVSQGKNPDEVIARDIMSQPVITVEEDMEVNEAVKLMVDKGIRRLPIVDDNGKLIGIVTMQDILQVEPYLVATIEEEMKKFQEELEELEEVSEIIEGVCDLCETYSEELRFVDGVWVCPECYEDILGREIEDRELEE.

CBS domains are found at residues 10–69 (ARRD…NPDE) and 76–132 (MSQP…LVAT). Positions 153-187 (IIEGVCDLCETYSEELRFVDGVWVCPECYEDILGR) constitute an ACP-type MB domain. 4 residues coordinate Fe cation: Cys158, Cys161, Cys177, and Cys180. Residues Cys158, Cys161, Cys177, and Cys180 each contribute to the Zn(2+) site.

This is an uncharacterized protein from Methanopyrus kandleri (strain AV19 / DSM 6324 / JCM 9639 / NBRC 100938).